The chain runs to 660 residues: Iron(3+)-hydroxamate import system permease protein FhuB (660 aa).

Helical transmembrane passes span 5 to 25 (IALFPALLLALLVIVATALTW), 62 to 82 (LAISLLVGAGLGLVGVLFQQV), 93 to 113 (LGVATGAQLGITVTTLWAIPG), 118 to 138 (QFAAQAGACVVGLIVFGVAWG), 147 to 167 (ILAGLVVSLYCGAINQLLVIF), 197 to 217 (QLLGGVMLTLLLLRPLTLMGL), 240 to 260 (AIVISALLVNAVGIIGFIGLF), 277 to 297 (LMLASLIGALILWLSDQIILW), 303 to 323 (MEVSTGSVTALIGAPLLLWLL), 348 to 368 (LAFALAGGVLLLMAVVVALSF), 391 to 411 (WPRIMAALFAGVMLAVAGCII), 424 to 444 (VLGISSGAAFGVVLMLFLVPG), 447 to 467 (FGWLLPAGSLGAAVTLLIIMI), 479 to 499 (MLLAGMALSTAFTMLLMMLQA), 528 to 548 (GIVMVILLAITPLCRRWLTIL), 567 to 587 (IALLLLAACLTATATMTIGPL), 607 to 627 (MPHIVISALVGGLLLVFADWC), and 635 to 655 (FQIPAGLLSTFIGAPYFIYLL).

It belongs to the binding-protein-dependent transport system permease family. FecCD subfamily. In terms of assembly, the complex is composed of two ATP-binding proteins (FhuC), a transmembrane protein (FhuB) and a solute-binding protein (FhuD). FhuB interacts with FhuC. FhuB interacts with FhuD. FhuB binds substrate-loaded FhuD more strongly than FhuD alone.

Its subcellular location is the cell inner membrane. In terms of biological role, part of the ABC transporter complex FhuCDB involved in iron(3+)-hydroxamate import. Responsible for the translocation of the substrate across the membrane. This is Iron(3+)-hydroxamate import system permease protein FhuB (fhuB) from Escherichia coli (strain K12).